The following is a 329-amino-acid chain: Calponin-3 (329 aa).

Lys-23 carries the N6-acetyllysine modification. Positions 26-130 constitute a Calponin-homology (CH) domain; it reads HQAEEDLRNW…TLVALAGLAK (105 aa). Position 158 is an N6-methyllysine (Lys-158). Calponin-like repeat units follow at residues 164-189, 204-229, and 243-268; these read IGLQMGTNKCASQAGMTAYGTRRHLY, ISLQMGTNKGASQAGMLAPGTRRDIY, and ISLQMGTNKVASQKGMSVYGLGRQVY. The disordered stretch occupies residues 279–329; that stretch reads PVIHNGSQGTGTNGSEISDSDYQAEYPDEYHGEYQDDYPRDYQYSDQGIDY. The segment covering 306–318 has biased composition (basic and acidic residues); the sequence is DEYHGEYQDDYPR. The residue at position 323 (Ser-323) is a Phosphoserine.

It belongs to the calponin family. As to expression, expressed in both non-smooth muscle tissues as well as smooth muscle tissues.

In terms of biological role, thin filament-associated protein that is implicated in the regulation and modulation of smooth muscle contraction. It is capable of binding to actin, calmodulin and tropomyosin. The interaction of calponin with actin inhibits the actomyosin Mg-ATPase activity. This chain is Calponin-3 (CNN3), found in Homo sapiens (Human).